The following is a 495-amino-acid chain: UDP-glycosyltransferase 73C13 (495 aa).

Histidine 24 acts as the Proton acceptor in catalysis. Histidine 24 serves as a coordination point for an anthocyanidin. Aspartate 129 functions as the Charge relay in the catalytic mechanism. Positions 356, 358, 373, 376, 377, 378, and 381 each coordinate UDP-alpha-D-glucose. An an anthocyanidin-binding site is contributed by alanine 396. UDP-alpha-D-glucose contacts are provided by aspartate 397 and glutamine 398.

It belongs to the UDP-glycosyltransferase family.

The enzyme catalyses oleanolate + UDP-alpha-D-glucose = oleanolate 3-O-beta-D-glucoside + UDP + H(+). Its function is as follows. Catalyzes the transfer of a glucose (Glc) moiety from UDP-Glc to the C-3 position of the oleanane sapogenins oleanolate and hederagenin, and to the C-28 carboxylic group of the lupane sapogenin betulinate. The monoglucosylated hederagenin 3-O-beta-D-glucoside is a feeding deterrent of the yellow-striped flea beetle (Phyllotreta nemorum). This is UDP-glycosyltransferase 73C13 from Barbarea vulgaris (Yellow rocket).